A 230-amino-acid polypeptide reads, in one-letter code: Large ribosomal subunit protein bL25 (230 aa).

Belongs to the bacterial ribosomal protein bL25 family. CTC subfamily. Part of the 50S ribosomal subunit; part of the 5S rRNA/L5/L18/L25 subcomplex. Contacts the 5S rRNA. Binds to the 5S rRNA independently of L5 and L18.

Functionally, this is one of the proteins that binds to the 5S RNA in the ribosome where it forms part of the central protuberance. In Rhodopseudomonas palustris (strain ATCC BAA-98 / CGA009), this protein is Large ribosomal subunit protein bL25 (rplY).